A 917-amino-acid polypeptide reads, in one-letter code: Isoleucine--tRNA ligase (917 aa).

The short motif at 59–69 (PYANGHIHIGH) is the 'HIGH' region element. L-isoleucyl-5'-AMP is bound at residue Glu569. Positions 610-614 (KMSKS) match the 'KMSKS' region motif. Lys613 provides a ligand contact to ATP. Zn(2+) contacts are provided by Cys890, Cys893, Cys905, and Cys908.

This sequence belongs to the class-I aminoacyl-tRNA synthetase family. IleS type 1 subfamily. As to quaternary structure, monomer. Requires Zn(2+) as cofactor.

The protein resides in the cytoplasm. It catalyses the reaction tRNA(Ile) + L-isoleucine + ATP = L-isoleucyl-tRNA(Ile) + AMP + diphosphate. In terms of biological role, catalyzes the attachment of isoleucine to tRNA(Ile). As IleRS can inadvertently accommodate and process structurally similar amino acids such as valine, to avoid such errors it has two additional distinct tRNA(Ile)-dependent editing activities. One activity is designated as 'pretransfer' editing and involves the hydrolysis of activated Val-AMP. The other activity is designated 'posttransfer' editing and involves deacylation of mischarged Val-tRNA(Ile). This is Isoleucine--tRNA ligase from Campylobacter jejuni subsp. jejuni serotype O:2 (strain ATCC 700819 / NCTC 11168).